A 960-amino-acid polypeptide reads, in one-letter code: Angiomotin-like protein 1 (960 aa).

The disordered stretch occupies residues 196-248 (SQFFRGQQPPPPPPQQQPGAVGHSYYMAGGASQKARTEGRPTVSRANSGQAHK). A phosphoserine mark is found at serine 243, serine 271, and serine 297. A coiled-coil region spans residues 261-281 (RSLSERIMQLSLERNGAKQHL). Disordered stretches follow at residues 277 to 317 (AKQH…EYPF), 381 to 407 (LPFPSTAQQHSPVSSQNSSVSGPLHSV), and 413 to 432 (PPMALGAAPPPPAASPSQQL). Residues 388 to 401 (QQHSPVSSQNSSVS) are compositionally biased toward low complexity. 2 coiled-coil regions span residues 440–641 (VERA…WLER) and 667–697 (ALMELVREKEERILALEADMTKWEQKYVEES). Residue serine 722 is modified to Phosphoserine. Positions 731–761 (SLEAHIWQEEEEVVQATRRCQDMEYTIKNLH) form a coiled coil. The tract at residues 775-826 (QQRSRKDAGKTDSSSLRPARSVPSIAAATGTHSRQTSLTSSQLAEERKEEKT) is disordered. Phosphoserine occurs at positions 795, 807, and 830. Polar residues predominate over residues 804-817 (GTHSRQTSLTSSQL). Residues 842-952 (NDHASTPLLP…NLLHKPEFPD (111 aa)) form a disordered region. Low complexity predominate over residues 845–870 (ASTPLLPTPSAATLSPPTPGTSASSA). Positions 898-911 (PTRSRLSGTPSNSP) are enriched in polar residues. Serine 904 bears the Phosphoserine mark. Threonine 906 is subject to Phosphothreonine. Position 910 is a phosphoserine (serine 910). Positions 957–960 (EVLI) match the PDZ-binding motif.

The protein belongs to the angiomotin family. In terms of processing, polyubiquitinated by NEDD4, leading to proteasomal degradation.

The protein localises to the cell junction. Its subcellular location is the tight junction. In terms of biological role, inhibits the Wnt/beta-catenin signaling pathway, probably by recruiting CTNNB1 to recycling endosomes and hence preventing its translocation to the nucleus. The chain is Angiomotin-like protein 1 (AMOTL1) from Bos taurus (Bovine).